Reading from the N-terminus, the 312-residue chain is Glutaminase (312 aa).

Ser-67, Asn-118, Glu-162, Asn-169, Tyr-193, Tyr-245, and Val-263 together coordinate substrate.

This sequence belongs to the glutaminase family. As to quaternary structure, homotetramer.

It carries out the reaction L-glutamine + H2O = L-glutamate + NH4(+). This is Glutaminase from Bordetella avium (strain 197N).